The following is a 498-amino-acid chain: Putative BTB/POZ domain-containing protein L788 (498 aa).

The BTB domain maps to 28 to 99 (TDIILVLEDD…FYGQKIKSGN (72 aa)).

It belongs to the mimivirus BTB/WD family.

This chain is Putative BTB/POZ domain-containing protein L788, found in Acanthamoeba polyphaga (Amoeba).